Consider the following 203-residue polypeptide: Urease accessory protein UreG (203 aa).

A GTP-binding site is contributed by 14–21 (GPVGSGKT).

Belongs to the SIMIBI class G3E GTPase family. UreG subfamily. In terms of assembly, homodimer. UreD, UreF and UreG form a complex that acts as a GTP-hydrolysis-dependent molecular chaperone, activating the urease apoprotein by helping to assemble the nickel containing metallocenter of UreC. The UreE protein probably delivers the nickel.

It localises to the cytoplasm. Its function is as follows. Facilitates the functional incorporation of the urease nickel metallocenter. This process requires GTP hydrolysis, probably effectuated by UreG. This Rhizobium etli (strain CIAT 652) protein is Urease accessory protein UreG.